The sequence spans 385 residues: Probable tRNA sulfurtransferase (385 aa).

The THUMP domain occupies 65 to 165 (AILQELFSFL…KEHFLVFTER (101 aa)). ATP is bound by residues 183-184 (LL), 208-209 (TF), Arg-267, Gly-285, and Gln-294.

It belongs to the ThiI family.

It localises to the cytoplasm. It carries out the reaction [ThiI sulfur-carrier protein]-S-sulfanyl-L-cysteine + a uridine in tRNA + 2 reduced [2Fe-2S]-[ferredoxin] + ATP + H(+) = [ThiI sulfur-carrier protein]-L-cysteine + a 4-thiouridine in tRNA + 2 oxidized [2Fe-2S]-[ferredoxin] + AMP + diphosphate. The enzyme catalyses [ThiS sulfur-carrier protein]-C-terminal Gly-Gly-AMP + S-sulfanyl-L-cysteinyl-[cysteine desulfurase] + AH2 = [ThiS sulfur-carrier protein]-C-terminal-Gly-aminoethanethioate + L-cysteinyl-[cysteine desulfurase] + A + AMP + 2 H(+). It participates in cofactor biosynthesis; thiamine diphosphate biosynthesis. Catalyzes the ATP-dependent transfer of a sulfur to tRNA to produce 4-thiouridine in position 8 of tRNAs, which functions as a near-UV photosensor. Also catalyzes the transfer of sulfur to the sulfur carrier protein ThiS, forming ThiS-thiocarboxylate. This is a step in the synthesis of thiazole, in the thiamine biosynthesis pathway. The sulfur is donated as persulfide by IscS. The sequence is that of Probable tRNA sulfurtransferase from Mycoplasma genitalium (strain ATCC 33530 / DSM 19775 / NCTC 10195 / G37) (Mycoplasmoides genitalium).